A 122-amino-acid polypeptide reads, in one-letter code: Basic phospholipase A2 F16 (122 aa).

7 disulfide bridges follow: cysteine 26–cysteine 115, cysteine 28–cysteine 44, cysteine 43–cysteine 95, cysteine 49–cysteine 122, cysteine 50–cysteine 88, cysteine 57–cysteine 81, and cysteine 75–cysteine 86. 3 residues coordinate Ca(2+): tyrosine 27, glycine 29, and glycine 31. Histidine 47 is an active-site residue. Aspartate 48 is a binding site for Ca(2+). Aspartate 89 is a catalytic residue.

Belongs to the phospholipase A2 family. Group II subfamily. D49 sub-subfamily. The cofactor is Ca(2+). As to expression, expressed by the venom gland.

Its subcellular location is the secreted. The enzyme catalyses a 1,2-diacyl-sn-glycero-3-phosphocholine + H2O = a 1-acyl-sn-glycero-3-phosphocholine + a fatty acid + H(+). Pre-incubation with heparin markedly reduces the neurotoxicity of this toxin. Functionally, snake venom phospholipase A2 (PLA2) that produces neuromuscular blockade in chick biventer cervicis preparations in the absence and presence of crotapotin. In contrast, in mouse phrenic nerve-diaphragm preparations, the neuromuscular blockade is dependent on crotapotin. PLA2 catalyzes the calcium-dependent hydrolysis of the 2-acyl groups in 3-sn-phosphoglycerides. The sequence is that of Basic phospholipase A2 F16 from Crotalus durissus terrificus (South American rattlesnake).